The primary structure comprises 522 residues: Glutamate--cysteine ligase (522 aa).

The protein belongs to the glutamate--cysteine ligase type 1 family. Type 1 subfamily.

It catalyses the reaction L-cysteine + L-glutamate + ATP = gamma-L-glutamyl-L-cysteine + ADP + phosphate + H(+). It participates in sulfur metabolism; glutathione biosynthesis; glutathione from L-cysteine and L-glutamate: step 1/2. In Vibrio parahaemolyticus serotype O3:K6 (strain RIMD 2210633), this protein is Glutamate--cysteine ligase.